A 417-amino-acid chain; its full sequence is D-amino acid dehydrogenase (417 aa).

An FAD-binding site is contributed by 3–17; that stretch reads IVVLGGGVVGVTSAW.

Belongs to the DadA oxidoreductase family. The cofactor is FAD.

The enzyme catalyses a D-alpha-amino acid + A + H2O = a 2-oxocarboxylate + AH2 + NH4(+). It participates in amino-acid degradation; D-alanine degradation; NH(3) and pyruvate from D-alanine: step 1/1. Its function is as follows. Oxidative deamination of D-amino acids. In Aeromonas hydrophila subsp. hydrophila (strain ATCC 7966 / DSM 30187 / BCRC 13018 / CCUG 14551 / JCM 1027 / KCTC 2358 / NCIMB 9240 / NCTC 8049), this protein is D-amino acid dehydrogenase.